The following is a 384-amino-acid chain: Methyl-CpG-binding domain-containing protein 10 (384 aa).

The MBD domain occupies 4–74; that stretch reads TDELVSIELP…SEFEWTTGET (71 aa). Positions 65–384 are disordered; the sequence is SEFEWTTGET…QQGAAASVSC (320 aa). Positions 80–91 are enriched in polar residues; that stretch reads RISQKVKATTPT. Positions 100-224 form a coiled coil; the sequence is KRRSSLTKKD…MEVDTSELEK (125 aa). Composition is skewed to basic and acidic residues over residues 106 to 227, 234 to 250, and 257 to 269; these read TKKD…KKAG, EPSKVEGLKDTEMKEAQ, and DVEKKPAEEKTEN. The segment covering 270 to 284 has biased composition (polar residues); the sequence is KGSVTTEANGEQNVT. The segment covering 295-365 has biased composition (basic and acidic residues); that stretch reads EADKGKESKE…NDMKAEDTNR (71 aa). Positions 310–356 form a coiled coil; sequence TEAEANKENDTQESDEKKTEAAANKENETQESDVKKTEAAVAEEKSN. Serine 323 is modified (phosphoserine). A compositionally biased stretch (low complexity) spans 369–384; the sequence is ANQVQQQQGAAASVSC.

In terms of tissue distribution, expressed in leaves, buds, flowers, stems and siliques.

It is found in the nucleus. Functionally, probable transcriptional regulator. Required for nucleolar dominance that consist in the silencing of rRNA genes inherited from one progenitor in genetic hybrids. The sequence is that of Methyl-CpG-binding domain-containing protein 10 (MBD10) from Arabidopsis thaliana (Mouse-ear cress).